We begin with the raw amino-acid sequence, 201 residues long: 3-isopropylmalate dehydratase small subunit (201 aa).

It belongs to the LeuD family. LeuD type 1 subfamily. In terms of assembly, heterodimer of LeuC and LeuD.

It catalyses the reaction (2R,3S)-3-isopropylmalate = (2S)-2-isopropylmalate. The protein operates within amino-acid biosynthesis; L-leucine biosynthesis; L-leucine from 3-methyl-2-oxobutanoate: step 2/4. Its function is as follows. Catalyzes the isomerization between 2-isopropylmalate and 3-isopropylmalate, via the formation of 2-isopropylmaleate. The sequence is that of 3-isopropylmalate dehydratase small subunit from Rhodopseudomonas palustris (strain ATCC BAA-98 / CGA009).